A 402-amino-acid chain; its full sequence is Protochlorophyllide reductase B, chloroplastic (402 aa).

This sequence belongs to the short-chain dehydrogenases/reductases (SDR) family. POR subfamily.

Its subcellular location is the plastid. It is found in the chloroplast. It catalyses the reaction chlorophyllide a + NADP(+) = protochlorophyllide a + NADPH + H(+). Its pathway is porphyrin-containing compound metabolism; chlorophyll biosynthesis. Phototransformation of protochlorophyllide (Pchlide) to chlorophyllide (Chlide). The polypeptide is Protochlorophyllide reductase B, chloroplastic (PORB) (Oryza sativa subsp. japonica (Rice)).